The sequence spans 547 residues: Chaperonin GroEL (547 aa).

Residues 29 to 32, K50, 86 to 90, G414, and D495 contribute to the ATP site; these read TLGP and DGTTT. Positions 525-547 are disordered; sequence PSDKEDSIPPMRGGMGGMGGMDF. A compositionally biased stretch (gly residues) spans 537-547; that stretch reads GGMGGMGGMDF.

Belongs to the chaperonin (HSP60) family. In terms of assembly, forms a cylinder of 14 subunits composed of two heptameric rings stacked back-to-back. Interacts with the co-chaperonin GroES.

It is found in the cytoplasm. The enzyme catalyses ATP + H2O + a folded polypeptide = ADP + phosphate + an unfolded polypeptide.. In terms of biological role, together with its co-chaperonin GroES, plays an essential role in assisting protein folding. The GroEL-GroES system forms a nano-cage that allows encapsulation of the non-native substrate proteins and provides a physical environment optimized to promote and accelerate protein folding. The chain is Chaperonin GroEL from Rickettsia felis (strain ATCC VR-1525 / URRWXCal2) (Rickettsia azadi).